Consider the following 78-residue polypeptide: MSQVCQVTGKRPVTGNNVSHSQRKTRRRFVPNLHTHRFWVEGEKRFVKLRVSSKGMRIIDKKGIEEVLSDIRKRGDRV.

Residues 1–24 (MSQVCQVTGKRPVTGNNVSHSQRK) are disordered.

This sequence belongs to the bacterial ribosomal protein bL28 family.

The polypeptide is Large ribosomal subunit protein bL28 (Chromohalobacter salexigens (strain ATCC BAA-138 / DSM 3043 / CIP 106854 / NCIMB 13768 / 1H11)).